Here is a 654-residue protein sequence, read N- to C-terminus: Translation factor GUF1, mitochondrial (654 aa).

A tr-type G domain is found at 57–237; that stretch reads ENYRNFSIVA…SVIKNIPSPV (181 aa). Residues 66–73, 130–134, and 184–187 each bind GTP; these read AHVDHGKS, DTPGH, and NKID.

Belongs to the TRAFAC class translation factor GTPase superfamily. Classic translation factor GTPase family. LepA subfamily.

Its subcellular location is the mitochondrion inner membrane. The catalysed reaction is GTP + H2O = GDP + phosphate + H(+). Its function is as follows. Promotes mitochondrial protein synthesis. May act as a fidelity factor of the translation reaction, by catalyzing a one-codon backward translocation of tRNAs on improperly translocated ribosomes. Binds to mitochondrial ribosomes in a GTP-dependent manner. The polypeptide is Translation factor GUF1, mitochondrial (Candida albicans (strain WO-1) (Yeast)).